Consider the following 545-residue polypeptide: Chaperonin GroEL (545 aa).

Residues 30–33 (TLGP), K51, 87–91 (DGTTT), G415, and D495 contribute to the ATP site.

It belongs to the chaperonin (HSP60) family. As to quaternary structure, forms a cylinder of 14 subunits composed of two heptameric rings stacked back-to-back. Interacts with the co-chaperonin GroES.

The protein localises to the cytoplasm. The enzyme catalyses ATP + H2O + a folded polypeptide = ADP + phosphate + an unfolded polypeptide.. Together with its co-chaperonin GroES, plays an essential role in assisting protein folding. The GroEL-GroES system forms a nano-cage that allows encapsulation of the non-native substrate proteins and provides a physical environment optimized to promote and accelerate protein folding. This is Chaperonin GroEL from Shewanella baltica (strain OS155 / ATCC BAA-1091).